A 95-amino-acid chain; its full sequence is Integration host factor subunit beta (95 aa).

Belongs to the bacterial histone-like protein family. In terms of assembly, heterodimer of an alpha and a beta chain.

This protein is one of the two subunits of integration host factor, a specific DNA-binding protein that functions in genetic recombination as well as in transcriptional and translational control. This Shewanella loihica (strain ATCC BAA-1088 / PV-4) protein is Integration host factor subunit beta.